The chain runs to 326 residues: Undecaprenyl-phosphate 4-deoxy-4-formamido-L-arabinose transferase (326 aa).

2 helical membrane-spanning segments follow: residues Leu-235–Ile-255 and Val-270–Leu-290.

The protein belongs to the glycosyltransferase 2 family.

It is found in the cell inner membrane. The enzyme catalyses UDP-4-deoxy-4-formamido-beta-L-arabinose + di-trans,octa-cis-undecaprenyl phosphate = 4-deoxy-4-formamido-alpha-L-arabinopyranosyl di-trans,octa-cis-undecaprenyl phosphate + UDP. Its pathway is glycolipid biosynthesis; 4-amino-4-deoxy-alpha-L-arabinose undecaprenyl phosphate biosynthesis; 4-amino-4-deoxy-alpha-L-arabinose undecaprenyl phosphate from UDP-4-deoxy-4-formamido-beta-L-arabinose and undecaprenyl phosphate: step 1/2. The protein operates within bacterial outer membrane biogenesis; lipopolysaccharide biosynthesis. Catalyzes the transfer of 4-deoxy-4-formamido-L-arabinose from UDP to undecaprenyl phosphate. The modified arabinose is attached to lipid A and is required for resistance to polymyxin and cationic antimicrobial peptides. The sequence is that of Undecaprenyl-phosphate 4-deoxy-4-formamido-L-arabinose transferase from Serratia proteamaculans (strain 568).